We begin with the raw amino-acid sequence, 208 residues long: Large ribosomal subunit protein uL4 (208 aa).

Over residues 47–58 (ARAARERSDVAR) the composition is skewed to basic and acidic residues. A disordered region spans residues 47–84 (ARAARERSDVARTGKKFGRQKGGGTARHGDRRAPIFIG).

Belongs to the universal ribosomal protein uL4 family. As to quaternary structure, part of the 50S ribosomal subunit.

One of the primary rRNA binding proteins, this protein initially binds near the 5'-end of the 23S rRNA. It is important during the early stages of 50S assembly. It makes multiple contacts with different domains of the 23S rRNA in the assembled 50S subunit and ribosome. Functionally, forms part of the polypeptide exit tunnel. The chain is Large ribosomal subunit protein uL4 from Sphingopyxis alaskensis (strain DSM 13593 / LMG 18877 / RB2256) (Sphingomonas alaskensis).